Here is a 174-residue protein sequence, read N- to C-terminus: Small ribosomal subunit protein uS5 (174 aa).

Residues leucine 18–isoleucine 81 form the S5 DRBM domain.

This sequence belongs to the universal ribosomal protein uS5 family. In terms of assembly, part of the 30S ribosomal subunit. Contacts proteins S4 and S8.

In terms of biological role, with S4 and S12 plays an important role in translational accuracy. Located at the back of the 30S subunit body where it stabilizes the conformation of the head with respect to the body. This Flavobacterium psychrophilum (strain ATCC 49511 / DSM 21280 / CIP 103535 / JIP02/86) protein is Small ribosomal subunit protein uS5.